The following is a 350-amino-acid chain: Methionine import ATP-binding protein MetN 1 (350 aa).

An ABC transporter domain is found at Ile12 to Val251. Residue Gly48–Ser55 participates in ATP binding.

This sequence belongs to the ABC transporter superfamily. Methionine importer (TC 3.A.1.24) family. As to quaternary structure, the complex is composed of two ATP-binding proteins (MetN), two transmembrane proteins (MetI) and a solute-binding protein (MetQ).

The protein resides in the cell membrane. It catalyses the reaction L-methionine(out) + ATP + H2O = L-methionine(in) + ADP + phosphate + H(+). The catalysed reaction is D-methionine(out) + ATP + H2O = D-methionine(in) + ADP + phosphate + H(+). Its function is as follows. Part of the ABC transporter complex MetNIQ involved in methionine import. Responsible for energy coupling to the transport system. The polypeptide is Methionine import ATP-binding protein MetN 1 (Oenococcus oeni (strain ATCC BAA-331 / PSU-1)).